A 208-amino-acid polypeptide reads, in one-letter code: Uracil phosphoribosyltransferase (208 aa).

Residues Arg78, Arg103, and 130-138 (DPMLATGGS) each bind 5-phospho-alpha-D-ribose 1-diphosphate. Uracil-binding positions include Ile193 and 198 to 200 (GDA). Asp199 serves as a coordination point for 5-phospho-alpha-D-ribose 1-diphosphate.

This sequence belongs to the UPRTase family. Requires Mg(2+) as cofactor.

The catalysed reaction is UMP + diphosphate = 5-phospho-alpha-D-ribose 1-diphosphate + uracil. It participates in pyrimidine metabolism; UMP biosynthesis via salvage pathway; UMP from uracil: step 1/1. With respect to regulation, allosterically activated by GTP. In terms of biological role, catalyzes the conversion of uracil and 5-phospho-alpha-D-ribose 1-diphosphate (PRPP) to UMP and diphosphate. This Tolumonas auensis (strain DSM 9187 / NBRC 110442 / TA 4) protein is Uracil phosphoribosyltransferase.